The primary structure comprises 668 residues: Fructose-1,6-bisphosphatase class 3 (668 aa).

It belongs to the FBPase class 3 family. The cofactor is Mn(2+).

The catalysed reaction is beta-D-fructose 1,6-bisphosphate + H2O = beta-D-fructose 6-phosphate + phosphate. It participates in carbohydrate biosynthesis; gluconeogenesis. This Clostridium botulinum (strain Loch Maree / Type A3) protein is Fructose-1,6-bisphosphatase class 3.